Here is a 356-residue protein sequence, read N- to C-terminus: uncharacterized protein (356 aa).

The interval 25–72 is disordered; sequence EENNQENNKKFIEEFYPDKESDKNFSDDDSDDSDDSDDSENSDEEFDN. A compositionally biased stretch (basic and acidic residues) spans 31-50; that stretch reads NNKKFIEEFYPDKESDKNFS. Residues 51–70 show a composition bias toward acidic residues; the sequence is DDDSDDSDDSDDSENSDEEF. The stretch at 328-356 forms a coiled coil; that stretch reads EDTLNHSHSNKIKELENKITELKYQNEIN.

It belongs to the mimivirus L17/R827 family.

This is an uncharacterized protein from Acanthamoeba polyphaga mimivirus (APMV).